We begin with the raw amino-acid sequence, 148 residues long: uncharacterized protein (148 aa).

It localises to the plastid. It is found in the chloroplast. This is an uncharacterized protein from Porphyra purpurea (Red seaweed).